The sequence spans 81 residues: Protein Vpu (81 aa).

The Extracellular portion of the chain corresponds to 1-7; it reads MQPLQIL. The helical transmembrane segment at 8–28 threads the bilayer; the sequence is SIVALVVAAIIAIVVWSIVFI. At 29 to 81 the chain is on the cytoplasmic side; sequence LIRKILRQRKIDRLIDRIRERAEDSGNESEGIRKELSALVEMGHDAPGDIDDL. Ser53 and Ser57 each carry phosphoserine; by host CK2.

Belongs to the HIV-1 VPU protein family. In terms of assembly, homopentamer. Interacts with host CD4 and BRTC; these interactions induce proteasomal degradation of CD4. Interacts with host BST2; this interaction leads to the degradation of host BST2. Interacts with host FBXW11. Interacts with host AP1M1; this interaction plays a role in the mistrafficking and subsequent degradation of host BST2. Interacts with host RANBP2; this interaction allows Vpu to down-regulate host BLM sumoylation. Phosphorylated by host CK2. This phosphorylation is necessary for interaction with human BTRC and degradation of CD4.

The protein resides in the host membrane. With respect to regulation, ion channel activity is inhibited by hexamethylene amiloride in vitro. Enhances virion budding by targeting host CD4 and Tetherin/BST2 to proteasome degradation. Degradation of CD4 prevents any unwanted premature interactions between viral Env and its host receptor CD4 in the endoplasmic reticulum. Degradation of antiretroviral protein Tetherin/BST2 is important for virion budding, as BST2 tethers new viral particles to the host cell membrane. Mechanistically, Vpu bridges either CD4 or BST2 to BTRC, a substrate recognition subunit of the Skp1/Cullin/F-box protein E3 ubiquitin ligase, induces their ubiquitination and subsequent proteasomal degradation. The alteration of the E3 ligase specificity by Vpu seems to promote the degradation of host IKBKB, leading to NF-kappa-B down-regulation and subsequent apoptosis. Acts as a viroporin that forms an oligomeric ion channel in membranes. Modulates the host DNA repair mechanisms to promote degradation of nuclear viral cDNA in cells that are already productively infected in order to suppress immune sensing and proviral hyper-integration (superinfection). Manipulates PML-NBs and modulates SUMOylation of host BLM protein thereby enhancing its DNA-end processing activity toward viral unintegrated linear DNA. Also inhibits RAD52-mediated homologous repair of viral cDNA, preventing the generation of dead-end circular forms of single copies of the long terminal repeat and permitting sustained nucleolytic attack. This chain is Protein Vpu, found in Homo sapiens (Human).